Consider the following 410-residue polypeptide: Serine hydroxymethyltransferase (410 aa).

(6S)-5,6,7,8-tetrahydrofolate contacts are provided by residues Leu116 and 120–122 (GHL). Lys225 bears the N6-(pyridoxal phosphate)lysine mark.

It belongs to the SHMT family. As to quaternary structure, homodimer. The cofactor is pyridoxal 5'-phosphate.

The protein localises to the cytoplasm. The catalysed reaction is (6R)-5,10-methylene-5,6,7,8-tetrahydrofolate + glycine + H2O = (6S)-5,6,7,8-tetrahydrofolate + L-serine. It participates in one-carbon metabolism; tetrahydrofolate interconversion. It functions in the pathway amino-acid biosynthesis; glycine biosynthesis; glycine from L-serine: step 1/1. Functionally, catalyzes the reversible interconversion of serine and glycine with tetrahydrofolate (THF) serving as the one-carbon carrier. This reaction serves as the major source of one-carbon groups required for the biosynthesis of purines, thymidylate, methionine, and other important biomolecules. Also exhibits THF-independent aldolase activity toward beta-hydroxyamino acids, producing glycine and aldehydes, via a retro-aldol mechanism. In Lacticaseibacillus casei (strain BL23) (Lactobacillus casei), this protein is Serine hydroxymethyltransferase.